Reading from the N-terminus, the 399-residue chain is Vitamin K-dependent protein Z (399 aa).

Positions 1–22 are cleaved as a signal peptide; the sequence is MAGCILLLRGFILTLILHQVEL. Residues 23–40 constitute a propeptide that is removed on maturation; it reads SVFLPAPKANNVLRRWRR. The Gla domain maps to 41 to 86; the sequence is GSSYFLEEIFQGNLEKECYEEVCNYEEAREVFENDVITDEFWRQYG. Glu-47, Glu-48, Glu-55, Glu-57, Glu-60, Glu-61, Glu-66, Glu-67, Glu-70, Glu-73, and Glu-80 each carry 4-carboxyglutamate. Cys-58 and Cys-63 form a disulfide bridge. EGF-like domains are found at residues 87-123 and 125-166; these read GGSPCVSQPCLNNGTCEDHIRSYSCTCSPGYEGKTCA and AKNE…KSCG. Disulfide bonds link Cys-91–Cys-102, Cys-96–Cys-111, Cys-113–Cys-122, Cys-129–Cys-141, Cys-137–Cys-150, Cys-152–Cys-165, and Cys-208–Cys-224. N-linked (GlcNAc...) asparagine glycosylation occurs at Asn-99. The residue at position 104 (Asp-104) is a (3R)-3-hydroxyaspartate. The Peptidase S1 domain occupies 172-399; that stretch reads ACGALTSEHI…YSMWFKQIMK (228 aa). Asn-230, Asn-305, and Asn-331 each carry an N-linked (GlcNAc...) asparagine glycan. A disulfide bond links Cys-326 and Cys-340.

It belongs to the peptidase S1 family. The iron and 2-oxoglutarate dependent 3-hydroxylation of aspartate and asparagine is (R) stereospecific within EGF domains. Plasma.

The protein localises to the secreted. Functionally, appears to assist hemostasis by binding thrombin and promoting its association with phospholipid vesicles. Inhibits activity of the coagulation protease factor Xa in the presence of SERPINA10, calcium and phospholipids. The chain is Vitamin K-dependent protein Z (Proz) from Mus musculus (Mouse).